Reading from the N-terminus, the 594-residue chain is Jacalin-related lectin 44 (594 aa).

The segment at 1–23 (MIQKLGAKGIKSDERNQREWDDG) is disordered. Jacalin-type lectin domains follow at residues 2–148 (IQKL…YFIS), 151–293 (PTRL…YFST), 296–441 (PNKL…YYRP), and 448–588 (VKRL…HVIP). The span at 10 to 23 (IKSDERNQREWDDG) shows a compositional bias: basic and acidic residues.

Belongs to the jacalin lectin family.

The sequence is that of Jacalin-related lectin 44 (JAL44) from Arabidopsis thaliana (Mouse-ear cress).